We begin with the raw amino-acid sequence, 607 residues long: Translation initiation factor IF-2 (607 aa).

The disordered stretch occupies residues 54-93; that stretch reads SAPQAQDSTPVAETPAAAQPAAPQAASSQPAAAQAAQAVA. Over residues 62 to 93 the composition is skewed to low complexity; the sequence is TPVAETPAAAQPAAPQAASSQPAAAQAAQAVA. The region spanning 108 to 281 is the tr-type G domain; sequence HRAPVVTIMG…ELEDLRADPK (174 aa). Residues 117–124 are G1; that stretch reads GHVDHGKT. 117–124 contacts GTP; that stretch reads GHVDHGKT. Positions 142 to 146 are G2; it reads GITQH. Residues 163-166 form a G3 region; that stretch reads DTPG. GTP-binding positions include 163 to 167 and 217 to 220; these read DTPGH and NKVD. Positions 217-220 are G4; it reads NKVD. A G5 region spans residues 253–255; the sequence is SAK.

This sequence belongs to the TRAFAC class translation factor GTPase superfamily. Classic translation factor GTPase family. IF-2 subfamily.

Its subcellular location is the cytoplasm. One of the essential components for the initiation of protein synthesis. Protects formylmethionyl-tRNA from spontaneous hydrolysis and promotes its binding to the 30S ribosomal subunits. Also involved in the hydrolysis of GTP during the formation of the 70S ribosomal complex. The chain is Translation initiation factor IF-2 from Deinococcus deserti (strain DSM 17065 / CIP 109153 / LMG 22923 / VCD115).